The following is a 586-amino-acid chain: Nucleus accumbens-associated protein 2 (586 aa).

A BTB domain is found at 30 to 94 (CDVSIVVKGQ…CYTGKLTMAA (65 aa)). Lys171 participates in a covalent cross-link: Glycyl lysine isopeptide (Lys-Gly) (interchain with G-Cter in SUMO2). Residues 177-196 (MPPASGPGLASKRPLETGPR) form a disordered region. Lys215 participates in a covalent cross-link: Glycyl lysine isopeptide (Lys-Gly) (interchain with G-Cter in SUMO2). Residues 236 to 272 (QVPYPPGERTSPGASSLPTTDSPTSYHNEEDEEDDEA) are disordered. Polar residues predominate over residues 247 to 261 (PGASSLPTTDSPTSY). Glycyl lysine isopeptide (Lys-Gly) (interchain with G-Cter in SUMO2) cross-links involve residues Lys297, Lys427, and Lys454. In terms of domain architecture, BEN spans 349–446 (GSGVYITRGQ…DMCTNARRVR (98 aa)). The segment at 542 to 586 (APEQLPADGQSSPQAFEQGNTSSSRPQTPVATATRRPEGTYAGTL) is disordered. Positions 550–572 (GQSSPQAFEQGNTSSSRPQTPVA) are enriched in polar residues.

Homooligomer; mediated by the BTB domain. Interacts with the NuRD complex. Interacts (via C-terminal part) with HDAC2. Interacts (via BTB domain) with MTA1, MTA2 and MTA3.

It is found in the nucleus. In terms of biological role, functions as a transcriptional repressor through its association with the NuRD complex. Recruits the NuRD complex to the promoter of MDM2, leading to the repression of MDM2 transcription and subsequent stability of p53/TP53. The polypeptide is Nucleus accumbens-associated protein 2 (Nacc2) (Mus musculus (Mouse)).